The primary structure comprises 371 residues: Diterpene cyclase DtcycA (371 aa).

3 residues coordinate Mg(2+): Asn234, Ser238, and Glu242.

It belongs to the terpene synthase family. As to quaternary structure, homodimer. The cofactor is Mg(2+).

The enzyme catalyses (2E,6E,10E)-geranylgeranyl diphosphate = cembrene C + diphosphate. It carries out the reaction (2E,6E,10E)-geranylgeranyl diphosphate + H2O = (R)-nephthenol + diphosphate. Functionally, diterpene cyclases that can form multiple diterpene products. This chain is Diterpene cyclase DtcycA, found in Streptomyces sp.